A 424-amino-acid polypeptide reads, in one-letter code: Chloroquine resistance transporter (424 aa).

Positions Met-1–Gly-10 are enriched in basic residues. Residues Met-1 to Glu-32 form a disordered region. Residues Met-1–Asn-57 are Cytoplasmic-facing. Residues Pro-16–Asn-29 show a composition bias toward basic and acidic residues. Residues Ile-58 to Ala-78 form a helical membrane-spanning segment. At Lys-79–Ser-89 the chain is on the vacuolar side. Asn-87 carries an N-linked (GlcNAc...) asparagine glycan. A helical transmembrane segment spans residues Phe-90–Met-110. Topologically, residues Phe-111–Asn-124 are cytoplasmic. The helical transmembrane segment at Phe-125–Ile-145 threads the bilayer. Residues Gly-146–Asn-153 lie on the Vacuolar side of the membrane. The chain crosses the membrane as a helical span at residues Ile-154 to Leu-174. Over Arg-175–His-179 the chain is Cytoplasmic. A helical membrane pass occupies residues Leu-180–Leu-200. The Vacuolar portion of the chain corresponds to Ser-201–Asn-208. Residues Ser-209–Thr-229 traverse the membrane as a helical segment. Residues Arg-230 to Ala-246 lie on the Cytoplasmic side of the membrane. A helical membrane pass occupies residues Val-247–Phe-267. The Vacuolar portion of the chain corresponds to Leu-268 to Lys-316. 2 cysteine pairs are disulfide-bonded: Cys-288–Cys-311 and Cys-300–Cys-308. Residues Thr-317–Glu-337 traverse the membrane as a helical segment. Topologically, residues Lys-338–Thr-345 are cytoplasmic. The helical transmembrane segment at Ile-346–Gly-366 threads the bilayer. Topologically, residues Asp-367–Asp-376 are vacuolar. Residues Phe-377–Leu-397 form a helical membrane-spanning segment. Over Glu-398 to His-424 the chain is Cytoplasmic.

Belongs to the CRT-like transporter family.

It localises to the vacuole membrane. Nutrient transporter. Involved in maintaining the osmotic homeostasis of the digestive vacuole. In Plasmodium vivax (strain Salvador I), this protein is Chloroquine resistance transporter.